A 340-amino-acid polypeptide reads, in one-letter code: MSANTGKPARHYLISYPRTASNLLLKILALDSQPNFSSGGFDGGYFFMPADDILTDPRIRVRARSISDWTADERAQLKETFQACFEAQQRWLESAESQGQSVFVKEHTVFFADPTARSCLQFGPSATSEPAWTVEYAGGSTHSKLNITVLPDEFLLTWLPTFLIRHPALAFPSLYRTVIKREGKESAAADNFASLLTTVEWSRSLYDFYVQNRESLPCSPDQRLEWPIVLDADDIIAHPATVTLYCDKIGMDPRQLCFNWDQLKSEELSKIEPNQLAMRMSLYQSTGIDTSKSSRGINVDDEATKWRSEFGIAVADHIEKLVRGAMADYEYLRARRLRAD.

The protein operates within secondary metabolite biosynthesis. In terms of biological role, sulfotransferase; part of the gene cluster that mediates the biosynthesis of pyrrolopyrazines, secondary metabolites showing insecticidal activity. The role of ppzF within the pathway has still to be determined. The single multifunctional NRPS ppzA is sufficient to produce peramine via condensation of 1-pyrroline-5-carboxylate and arginine, N-methylation of the alpha-amino group of arginine and reduction of the thioester and the cyclization to form an iminium ion resulting in release from the peptide synthetase. Deprotonation of this intermediate and oxidation of the pyrroline ring would give rise to peramine. In Epichloe species that produce only peramine, the peramine synthetase gene is not localized in a gene cluster, in contrast to Metarhizium species that contain additional pyrrolopyrazine biosynthesis genes. The 2-oxoglutarate-Fe(II) type oxidoreductase ppzC hydroxylates peramine to yield the newly identified compound 8-hydroxyperamine whereas ppzD converts L-proline into trans-4-hydroxy-L-proline, a precursor of peramine biosynthesis. The chain is Sulfotransferase ppzF from Metarhizium majus (strain ARSEF 297).